A 209-amino-acid polypeptide reads, in one-letter code: Kynurenine formamidase (209 aa).

Tryptophan 20 lines the substrate pocket. Residues histidine 50, histidine 54, and aspartate 56 each contribute to the Zn(2+) site. The active-site Proton donor/acceptor is histidine 60. Residues histidine 161 and glutamate 173 each coordinate Zn(2+).

Belongs to the Cyclase 1 superfamily. KynB family. Homodimer. Requires Zn(2+) as cofactor.

It catalyses the reaction N-formyl-L-kynurenine + H2O = L-kynurenine + formate + H(+). It participates in amino-acid degradation; L-tryptophan degradation via kynurenine pathway; L-kynurenine from L-tryptophan: step 2/2. Catalyzes the hydrolysis of N-formyl-L-kynurenine to L-kynurenine, the second step in the kynurenine pathway of tryptophan degradation. This chain is Kynurenine formamidase, found in Bacillus cytotoxicus (strain DSM 22905 / CIP 110041 / 391-98 / NVH 391-98).